The sequence spans 869 residues: Translation initiation factor IF-2 (869 aa).

Disordered regions lie at residues 51-78 (KQHG…NMGK) and 105-277 (EEET…SDLK). The span at 67-76 (QRKTTSTLNM) shows a compositional bias: polar residues. The segment covering 110–119 (RALAEQQAQL) has biased composition (low complexity). Residues 120-241 (EAEKAAAEEA…KKQEAEEVHV (122 aa)) show a composition bias toward basic and acidic residues. The tr-type G domain occupies 369–542 (SRAPVVTIMG…ELLDLKAPPT (174 aa)). The tract at residues 378–385 (GHVDHGKT) is G1. 378-385 (GHVDHGKT) provides a ligand contact to GTP. The G2 stretch occupies residues 403-407 (GITQH). The tract at residues 424–427 (DTPG) is G3. Residues 424–428 (DTPGH) and 478–481 (NKMD) each bind GTP. Residues 478–481 (NKMD) are G4. Positions 514-516 (SAK) are G5.

It belongs to the TRAFAC class translation factor GTPase superfamily. Classic translation factor GTPase family. IF-2 subfamily.

Its subcellular location is the cytoplasm. Functionally, one of the essential components for the initiation of protein synthesis. Protects formylmethionyl-tRNA from spontaneous hydrolysis and promotes its binding to the 30S ribosomal subunits. Also involved in the hydrolysis of GTP during the formation of the 70S ribosomal complex. This is Translation initiation factor IF-2 from Pseudoalteromonas atlantica (strain T6c / ATCC BAA-1087).